Reading from the N-terminus, the 412-residue chain is Gamma-glutamyl phosphate reductase (412 aa).

This sequence belongs to the gamma-glutamyl phosphate reductase family.

It localises to the cytoplasm. The enzyme catalyses L-glutamate 5-semialdehyde + phosphate + NADP(+) = L-glutamyl 5-phosphate + NADPH + H(+). Its pathway is amino-acid biosynthesis; L-proline biosynthesis; L-glutamate 5-semialdehyde from L-glutamate: step 2/2. Catalyzes the NADPH-dependent reduction of L-glutamate 5-phosphate into L-glutamate 5-semialdehyde and phosphate. The product spontaneously undergoes cyclization to form 1-pyrroline-5-carboxylate. This is Gamma-glutamyl phosphate reductase from Bartonella quintana (strain Toulouse) (Rochalimaea quintana).